A 445-amino-acid chain; its full sequence is Chromosome partition protein MukF (445 aa).

The tract at residues 212-240 (LDETSGNLRELQDTLNAAGDKLQEQLLRI) is leucine-zipper.

The protein belongs to the MukF family. Interacts, and probably forms a ternary complex, with MukE and MukB via its C-terminal region. The complex formation is stimulated by calcium or magnesium. It is required for an interaction between MukE and MukB.

Its subcellular location is the cytoplasm. The protein resides in the nucleoid. Its function is as follows. Involved in chromosome condensation, segregation and cell cycle progression. May participate in facilitating chromosome segregation by condensation DNA from both sides of a centrally located replisome during cell division. Not required for mini-F plasmid partitioning. Probably acts via its interaction with MukB and MukE. Overexpression results in anucleate cells. It has a calcium binding activity. This is Chromosome partition protein MukF from Mannheimia succiniciproducens (strain KCTC 0769BP / MBEL55E).